A 428-amino-acid polypeptide reads, in one-letter code: tRNA(Ile2) 2-agmatinylcytidine synthetase TiaS (428 aa).

This sequence belongs to the TiaS family.

Its subcellular location is the cytoplasm. The catalysed reaction is cytidine(34) in tRNA(Ile2) + agmatine + ATP + H2O = 2-agmatinylcytidine(34) in tRNA(Ile2) + AMP + 2 phosphate + 2 H(+). Its function is as follows. ATP-dependent agmatine transferase that catalyzes the formation of 2-agmatinylcytidine (agm2C) at the wobble position (C34) of tRNA(Ile2), converting the codon specificity from AUG to AUA. The polypeptide is tRNA(Ile2) 2-agmatinylcytidine synthetase TiaS (Methanosarcina acetivorans (strain ATCC 35395 / DSM 2834 / JCM 12185 / C2A)).